The sequence spans 48 residues: Protein YodE (48 aa).

The chain is Protein YodE from Escherichia coli (strain K12).